A 185-amino-acid chain; its full sequence is Ribosome-recycling factor (185 aa).

It belongs to the RRF family.

The protein resides in the cytoplasm. In terms of biological role, responsible for the release of ribosomes from messenger RNA at the termination of protein biosynthesis. May increase the efficiency of translation by recycling ribosomes from one round of translation to another. The chain is Ribosome-recycling factor from Thermotoga sp. (strain RQ2).